A 665-amino-acid polypeptide reads, in one-letter code: Soluble lamin-associated protein of 75 kDa (665 aa).

A disordered region spans residues 309–665; sequence AFASTSEGPE…GPGKKKAKLT (357 aa). The segment covering 311 to 326 has biased composition (polar residues); sequence ASTSEGPEKTPVSTRT. The span at 327 to 338 shows a compositional bias: basic residues; it reads RSSHLKRPKIGK. Phosphoserine is present on residues S348 and S377. Acidic residues predominate over residues 376-397; that stretch reads SSEEFLEEEPEQGVIDFEDESG. Residues 412–421 are compositionally biased toward basic and acidic residues; it reads QKQDGDKDSA. Acidic residues predominate over residues 440–451; the sequence is TEDEDSTSEGLE. Phosphoserine is present on residues S447 and S512. Polar residues-rich tracts occupy residues 521-533 and 553-566; these read LGSS…VSNI and VSQN…SSVE. S610, S613, and S630 each carry phosphoserine. A compositionally biased stretch (basic residues) spans 646–665; sequence NLRRKAKGHKGPGKKKAKLT.

It belongs to the FAM169 family.

The protein localises to the nucleus envelope. The protein resides in the nucleus inner membrane. This chain is Soluble lamin-associated protein of 75 kDa (Fam169a), found in Mus musculus (Mouse).